The primary structure comprises 569 residues: uncharacterized protein (569 aa).

The helical transmembrane segment at 2 to 22 (VVIAALLGSLAVLAFLFYLWY) threads the bilayer.

It localises to the membrane. This is an uncharacterized protein from Mycoplasma pneumoniae (strain ATCC 29342 / M129 / Subtype 1) (Mycoplasmoides pneumoniae).